A 418-amino-acid polypeptide reads, in one-letter code: METKRLTQRSMVFVLAGGRGSRLKELTDRRVKPAVPFGGKARIIDFALSNALNSGIRKMAIATQYKAHSLIRHLQRGWTFFRAERNEFLDILPASQRTGTEAWYAGTADAVTQNIDIVDSYDVDYVIILAGDHIYKMDYEVMLREHVETGADVTVGCLTVPRMEATAFGVMATDETGKITSFLEKPADPPAMPDDPNSALASMGIYVFKWSFLRELLVADALDTNSSHDFGHDLIPEIVENGKAMAHRYDRSCVRADGAPVYWKDVGTVDAFWEAHIDLTNFTPDLDLWDKNWPIWTYSESVPPAKFIHDERDRRGMAISSMVAGGCIISGTEVRNSCLFTGVHTNSYAVLDHAVVLPNVVVNRHARLRKVVVDSDVVVPEGLVVGEDPTEDAKWFRVSERGVTLITQDMLDKRAQAQ.

Alpha-D-glucose 1-phosphate contacts are provided by residues Y104, G169, 184 to 185 (EK), and S202.

This sequence belongs to the bacterial/plant glucose-1-phosphate adenylyltransferase family. In terms of assembly, homotetramer.

The enzyme catalyses alpha-D-glucose 1-phosphate + ATP + H(+) = ADP-alpha-D-glucose + diphosphate. The protein operates within glycan biosynthesis; glycogen biosynthesis. Involved in the biosynthesis of ADP-glucose, a building block required for the elongation reactions to produce glycogen. Catalyzes the reaction between ATP and alpha-D-glucose 1-phosphate (G1P) to produce pyrophosphate and ADP-Glc. This chain is Glucose-1-phosphate adenylyltransferase, found in Jannaschia sp. (strain CCS1).